Consider the following 613-residue polypeptide: Methionine--tRNA ligase (613 aa).

Positions Pro15 to His25 match the 'HIGH' region motif. 4 residues coordinate Zn(2+): Cys147, Cys150, Cys160, and Cys163. A 'KMSKS' region motif is present at residues Lys351 to Ser355. Position 354 (Ser354) interacts with ATP.

The protein belongs to the class-I aminoacyl-tRNA synthetase family. MetG type 1 subfamily. In terms of assembly, monomer. The cofactor is Zn(2+).

It localises to the cytoplasm. It carries out the reaction tRNA(Met) + L-methionine + ATP = L-methionyl-tRNA(Met) + AMP + diphosphate. Is required not only for elongation of protein synthesis but also for the initiation of all mRNA translation through initiator tRNA(fMet) aminoacylation. This Corynebacterium efficiens (strain DSM 44549 / YS-314 / AJ 12310 / JCM 11189 / NBRC 100395) protein is Methionine--tRNA ligase.